The following is a 308-amino-acid chain: D-alanine--D-alanine ligase (308 aa).

An ATP-grasp domain is found at K104–E304. Position 131 to 187 (L131 to T187) interacts with ATP. 3 residues coordinate Mg(2+): D255, E271, and N273.

Belongs to the D-alanine--D-alanine ligase family. The cofactor is Mg(2+). Mn(2+) serves as cofactor.

Its subcellular location is the cytoplasm. The catalysed reaction is 2 D-alanine + ATP = D-alanyl-D-alanine + ADP + phosphate + H(+). The protein operates within cell wall biogenesis; peptidoglycan biosynthesis. In terms of biological role, cell wall formation. This chain is D-alanine--D-alanine ligase, found in Sphingopyxis alaskensis (strain DSM 13593 / LMG 18877 / RB2256) (Sphingomonas alaskensis).